The sequence spans 126 residues: Nucleoside diphosphate kinase B (126 aa).

ATP is bound by residues Lys-6, Phe-37, Thr-68, Arg-79, and Asn-89. His-92 (pros-phosphohistidine intermediate) is an active-site residue.

Belongs to the NDK family. Mg(2+) is required as a cofactor.

It localises to the cytoplasm. It is found in the nucleus. The protein localises to the cell projection. Its subcellular location is the lamellipodium. The protein resides in the ruffle. The enzyme catalyses a 2'-deoxyribonucleoside 5'-diphosphate + ATP = a 2'-deoxyribonucleoside 5'-triphosphate + ADP. It carries out the reaction a ribonucleoside 5'-diphosphate + ATP = a ribonucleoside 5'-triphosphate + ADP. Its function is as follows. Major role in the synthesis of nucleoside triphosphates other than ATP. This chain is Nucleoside diphosphate kinase B (nme2), found in Merluccius capensis (Shallow-water Cape hake).